The sequence spans 205 residues: Translation initiation factor 2 subunit beta (205 aa).

The TRAM domain maps to 145–203 (GIEIGKEYTVTIESTGSAGEGIARYQGYTIYVPKAKKGERVKIIIRKIKRNVAIAELAD).

It belongs to the eIF-2-beta/eIF-5 family. In terms of assembly, heterotrimer composed of an alpha, a beta and a gamma chain.

Functionally, eIF-2 functions in the early steps of protein synthesis by forming a ternary complex with GTP and initiator tRNA. The chain is Translation initiation factor 2 subunit beta from Picrophilus torridus (strain ATCC 700027 / DSM 9790 / JCM 10055 / NBRC 100828 / KAW 2/3).